Reading from the N-terminus, the 399-residue chain is Argininosuccinate synthase (399 aa).

8–16 (AYSGGLDTT) contacts ATP. Position 87 (Tyr-87) interacts with L-citrulline. Residue Gly-117 coordinates ATP. L-aspartate contacts are provided by Thr-119, Asn-123, and Asp-124. Asn-123 serves as a coordination point for L-citrulline. Positions 127, 175, 259, and 271 each coordinate L-citrulline.

The protein belongs to the argininosuccinate synthase family. Type 1 subfamily. As to quaternary structure, homotetramer.

Its subcellular location is the cytoplasm. The catalysed reaction is L-citrulline + L-aspartate + ATP = 2-(N(omega)-L-arginino)succinate + AMP + diphosphate + H(+). It functions in the pathway amino-acid biosynthesis; L-arginine biosynthesis; L-arginine from L-ornithine and carbamoyl phosphate: step 2/3. This chain is Argininosuccinate synthase, found in Corynebacterium urealyticum (strain ATCC 43042 / DSM 7109).